The following is a 434-amino-acid chain: 3-phosphoshikimate 1-carboxyvinyltransferase (434 aa).

3-phosphoshikimate contacts are provided by Lys22, Ser23, and Arg27. Lys22 lines the phosphoenolpyruvate pocket. Gly93 and Arg121 together coordinate phosphoenolpyruvate. 6 residues coordinate 3-phosphoshikimate: Ser168, Ser169, Gln170, Ser199, Asp320, and Lys347. Gln170 is a binding site for phosphoenolpyruvate. Catalysis depends on Asp320, which acts as the Proton acceptor. Phosphoenolpyruvate contacts are provided by Arg351, Arg394, and Lys419.

It belongs to the EPSP synthase family. In terms of assembly, monomer.

It is found in the cytoplasm. It carries out the reaction 3-phosphoshikimate + phosphoenolpyruvate = 5-O-(1-carboxyvinyl)-3-phosphoshikimate + phosphate. It participates in metabolic intermediate biosynthesis; chorismate biosynthesis; chorismate from D-erythrose 4-phosphate and phosphoenolpyruvate: step 6/7. In terms of biological role, catalyzes the transfer of the enolpyruvyl moiety of phosphoenolpyruvate (PEP) to the 5-hydroxyl of shikimate-3-phosphate (S3P) to produce enolpyruvyl shikimate-3-phosphate and inorganic phosphate. In Paraburkholderia phymatum (strain DSM 17167 / CIP 108236 / LMG 21445 / STM815) (Burkholderia phymatum), this protein is 3-phosphoshikimate 1-carboxyvinyltransferase.